A 232-amino-acid chain; its full sequence is MENQPKLNSSKEVIAFLAERFPHCFSAEGEARPLKIGIFQDLVDRVAGEMNLSKTQLRSALRLYTSSWRYLYGVKPGATRVDLDGNPCGELDEQHVEHARKQLEEAKARVQAQRAEQQAKKREAAAAAGEKEDAPRRERKPRPTTPRRKEGAERKPRAQKPVEKAPKTVKAPREEQHTPVSDISALTVGQALKVKAGQNAMDATVLEITKDGVRVQLNSGMSLIVRAEHLVF.

A disordered region spans residues 105–182; it reads EAKARVQAQR…REEQHTPVSD (78 aa). The span at 117-136 shows a compositional bias: basic and acidic residues; the sequence is QQAKKREAAAAAGEKEDAPR. Residues 137–146 show a composition bias toward basic residues; it reads RERKPRPTTP. Basic and acidic residues predominate over residues 147–177; sequence RRKEGAERKPRAQKPVEKAPKTVKAPREEQH.

This sequence belongs to the ProQ family.

It localises to the cytoplasm. RNA chaperone with significant RNA binding, RNA strand exchange and RNA duplexing activities. May regulate ProP activity through an RNA-based, post-transcriptional mechanism. The polypeptide is RNA chaperone ProQ (Escherichia coli (strain ATCC 8739 / DSM 1576 / NBRC 3972 / NCIMB 8545 / WDCM 00012 / Crooks)).